Consider the following 339-residue polypeptide: Heat-inducible transcription repressor HrcA (339 aa).

Belongs to the HrcA family.

Negative regulator of class I heat shock genes (grpE-dnaK-dnaJ and groELS operons). Prevents heat-shock induction of these operons. The protein is Heat-inducible transcription repressor HrcA of Clostridium perfringens (strain ATCC 13124 / DSM 756 / JCM 1290 / NCIMB 6125 / NCTC 8237 / Type A).